A 563-amino-acid chain; its full sequence is CTP synthase (563 aa).

An amidoligase domain region spans residues 1–280 (MTKFVFVTGG…DEMICMKLQL (280 aa)). Serine 13 provides a ligand contact to CTP. Serine 13 contacts UTP. ATP is bound by residues 14 to 19 (SLGKGI) and aspartate 71. Mg(2+) contacts are provided by aspartate 71 and glutamate 154. Residues 161 to 163 (DIE), 201 to 206 (KTKPTQ), and lysine 237 each bind CTP. UTP-binding positions include 201-206 (KTKPTQ) and lysine 237. Positions 305–557 (TIAMAGKYTE…IAAALEHHAA (253 aa)) constitute a Glutamine amidotransferase type-1 domain. Glycine 366 contacts L-glutamine. The Nucleophile; for glutamine hydrolysis role is filled by cysteine 393. L-glutamine-binding positions include 394-397 (LGMQ), glutamate 417, and arginine 483. Residues histidine 530 and glutamate 532 contribute to the active site.

Belongs to the CTP synthase family. As to quaternary structure, homotetramer.

It catalyses the reaction UTP + L-glutamine + ATP + H2O = CTP + L-glutamate + ADP + phosphate + 2 H(+). The enzyme catalyses L-glutamine + H2O = L-glutamate + NH4(+). The catalysed reaction is UTP + NH4(+) + ATP = CTP + ADP + phosphate + 2 H(+). It participates in pyrimidine metabolism; CTP biosynthesis via de novo pathway; CTP from UDP: step 2/2. With respect to regulation, allosterically activated by GTP, when glutamine is the substrate; GTP has no effect on the reaction when ammonia is the substrate. The allosteric effector GTP functions by stabilizing the protein conformation that binds the tetrahedral intermediate(s) formed during glutamine hydrolysis. Inhibited by the product CTP, via allosteric rather than competitive inhibition. Its function is as follows. Catalyzes the ATP-dependent amination of UTP to CTP with either L-glutamine or ammonia as the source of nitrogen. Regulates intracellular CTP levels through interactions with the four ribonucleotide triphosphates. The polypeptide is CTP synthase (Leptothrix cholodnii (strain ATCC 51168 / LMG 8142 / SP-6) (Leptothrix discophora (strain SP-6))).